Reading from the N-terminus, the 366-residue chain is Histidinol-phosphate aminotransferase 2 (366 aa).

An N6-(pyridoxal phosphate)lysine modification is found at lysine 226.

This sequence belongs to the class-II pyridoxal-phosphate-dependent aminotransferase family. Histidinol-phosphate aminotransferase subfamily. As to quaternary structure, homodimer. Pyridoxal 5'-phosphate is required as a cofactor.

The catalysed reaction is L-histidinol phosphate + 2-oxoglutarate = 3-(imidazol-4-yl)-2-oxopropyl phosphate + L-glutamate. The protein operates within amino-acid biosynthesis; L-histidine biosynthesis; L-histidine from 5-phospho-alpha-D-ribose 1-diphosphate: step 7/9. In Haemophilus influenzae (strain ATCC 51907 / DSM 11121 / KW20 / Rd), this protein is Histidinol-phosphate aminotransferase 2 (hisC2).